Here is a 95-residue protein sequence, read N- to C-terminus: Acylphosphatase (95 aa).

Residues arginine 5 to proline 93 form the Acylphosphatase-like domain. Residues arginine 20 and asparagine 38 contribute to the active site.

Belongs to the acylphosphatase family.

The catalysed reaction is an acyl phosphate + H2O = a carboxylate + phosphate + H(+). The chain is Acylphosphatase (acyP) from Pyrobaculum arsenaticum (strain DSM 13514 / JCM 11321 / PZ6).